The following is a 373-amino-acid chain: Forkhead box protein F1 (373 aa).

The disordered stretch occupies residues 1-51; that stretch reads MTAEIQQPPSQPPAQSSPMSAATDKHGGQPSVMESANCATKTKKTNAGIRR. Residues 13–22 are compositionally biased toward low complexity; that stretch reads PAQSSPMSAA. The fork-head DNA-binding region spans 54–148; the sequence is KPPYSYIALI…EEGSFRRRPR (95 aa). Disordered regions lie at residues 236–255 and 283–306; these read GSSG…LGGG and QPLS…SLDQ. The segment covering 286-306 has biased composition (low complexity); the sequence is SPCNSAANPLSSSLSSHSLDQ.

The protein resides in the nucleus. Functionally, probable transcription factor. Required for smooth muscle (visceral mesoderm) differentiation during gut development. Also required for normal proliferation of the lateral plate mesoderm. Acts as a downstream mediator of bmp4-signaling. In Xenopus tropicalis (Western clawed frog), this protein is Forkhead box protein F1.